Here is a 248-residue protein sequence, read N- to C-terminus: 2,3-bisphosphoglycerate-dependent phosphoglycerate mutase 2 (248 aa).

Residues 8 to 15 (RHGESAWN), 21 to 22 (TG), Arg-60, 87 to 90 (EKHY), Lys-98, 114 to 115 (RR), and 183 to 184 (GN) each bind substrate. His-9 (tele-phosphohistidine intermediate) is an active-site residue. Residue Glu-87 is the Proton donor/acceptor of the active site.

This sequence belongs to the phosphoglycerate mutase family. BPG-dependent PGAM subfamily.

It catalyses the reaction (2R)-2-phosphoglycerate = (2R)-3-phosphoglycerate. It participates in carbohydrate degradation; glycolysis; pyruvate from D-glyceraldehyde 3-phosphate: step 3/5. Functionally, catalyzes the interconversion of 2-phosphoglycerate and 3-phosphoglycerate. The protein is 2,3-bisphosphoglycerate-dependent phosphoglycerate mutase 2 of Bacteroides thetaiotaomicron (strain ATCC 29148 / DSM 2079 / JCM 5827 / CCUG 10774 / NCTC 10582 / VPI-5482 / E50).